An 89-amino-acid chain; its full sequence is Elongation factor 1-beta (89 aa).

It belongs to the EF-1-beta/EF-1-delta family.

Functionally, promotes the exchange of GDP for GTP in EF-1-alpha/GDP, thus allowing the regeneration of EF-1-alpha/GTP that could then be used to form the ternary complex EF-1-alpha/GTP/AAtRNA. The polypeptide is Elongation factor 1-beta (Methanococcus vannielii (strain ATCC 35089 / DSM 1224 / JCM 13029 / OCM 148 / SB)).